Reading from the N-terminus, the 90-residue chain is Hemoglobin subunit alpha-1 (90 aa).

The Globin domain maps to 1-90; that stretch reads VLTDDDKNHV…SKLSDLHAEK (90 aa).

This sequence belongs to the globin family. In terms of assembly, heterotetramer of two alpha chains and two beta chains. Red blood cells.

Involved in oxygen transport from the lung to the various peripheral tissues. The chain is Hemoglobin subunit alpha-1 from Saara hardwickii (Indian spiny-tailed lizard).